The primary structure comprises 351 residues: Cyanuric acid amidohydrolase (351 aa).

Residues 1-96 (MPSLRAHVFR…HWTVFARETV (96 aa)) form an RU A region. Residues arginine 53 and 77-78 (SG) each bind substrate. An RU B region spans residues 103-240 (ALAIGVSRTP…HEIIVLGMSA (138 aa)). The active site involves lysine 153. Residues arginine 185 and 223–224 (SS) contribute to the substrate site. The active-site Nucleophile is serine 223. Residues 246 to 351 (LSIDHAVMRD…PVAIIVEKEQ (106 aa)) form an RU C region. Glutamate 283 contacts Mg(2+). Substrate-binding positions include arginine 310 and 329-330 (SG). Residues alanine 332, glutamine 335, glycine 336, proline 337, and glycine 340 each coordinate Mg(2+).

It belongs to the cyclic amide hydrolase (CyAH) family. In terms of assembly, homotetramer.

The enzyme catalyses cyanurate + H2O = 1-carboxybiuret + H(+). Its pathway is xenobiotic degradation; atrazine degradation; biuret from cyanurate: step 1/1. Its activity is regulated as follows. Inhibited by barbituric acid. In terms of biological role, responsible for the hydrolysis of cyanuric acid, an intermediate formed during catabolism of s-triazine based compounds in herbicides such as atrazine and polymers such as melamine. Catalyzes the hydrolytic opening of the s-triazine ring of cyanuric acid (2,4,6-trihydroxy-s-triazine) to yield carbon dioxide and carboxybiuret, which spontaneously decarboxylates to biuret. This chain is Cyanuric acid amidohydrolase, found in Rhizobium johnstonii (strain DSM 114642 / LMG 32736 / 3841) (Rhizobium leguminosarum bv. viciae).